We begin with the raw amino-acid sequence, 359 residues long: Peptide chain release factor 1 (359 aa).

An N5-methylglutamine modification is found at glutamine 236.

The protein belongs to the prokaryotic/mitochondrial release factor family. Methylated by PrmC. Methylation increases the termination efficiency of RF1.

The protein resides in the cytoplasm. Peptide chain release factor 1 directs the termination of translation in response to the peptide chain termination codons UAG and UAA. The sequence is that of Peptide chain release factor 1 from Streptococcus pneumoniae (strain Hungary19A-6).